Reading from the N-terminus, the 388-residue chain is Calreticulin (388 aa).

The first 17 residues, 1–17 (MQLSLLVGLVCFSAINA), serve as a signal peptide directing secretion. A disulfide bond links cysteine 103 and cysteine 135. Tyrosine 107, lysine 109, tyrosine 126, and aspartate 133 together coordinate an alpha-D-glucoside. 7 consecutive repeat copies span residues 189 to 200 (AESGELEADWDF), 208 to 219 (DPDAKKPEDWDE), 225 to 236 (DEDDKKPEDWDK), 242 to 253 (DPDAKKPEDWDD), 257 to 267 (GEWEPPMVDNP), 271 to 281 (GEWKPKQKKNP), and 285 to 295 (GKWIHPEIEIP). The interval 189-253 (AESGELEADW…DAKKPEDWDD (65 aa)) is 4 X approximate repeats. The interval 193–282 (ELEADWDFLP…WKPKQKKNPA (90 aa)) is disordered. Basic and acidic residues predominate over residues 205–215 (KIKDPDAKKPE). Positions 216 to 227 (DWDEREFIDDED) are enriched in acidic residues. A compositionally biased stretch (basic and acidic residues) spans 228–249 (DKKPEDWDKPEHIPDPDAKKPE). The segment covering 250-259 (DWDDEMDGEW) has biased composition (acidic residues). The 3 X approximate repeats stretch occupies residues 257 to 295 (GEWEPPMVDNPEYKGEWKPKQKKNPAYKGKWIHPEIEIP). An alpha-D-glucoside is bound at residue aspartate 315. The interval 349 to 388 (REGEKKKGKKTKKQKKKEKNEKIKKEKMKKRKRANRKKKK) is disordered. Composition is skewed to basic residues over residues 354–365 (KKGKKTKKQKKK) and 373–388 (KEKM…KKKK).

This sequence belongs to the calreticulin family.

It is found in the endoplasmic reticulum lumen. In terms of biological role, molecular calcium-binding chaperone promoting folding, oligomeric assembly and quality control in the ER via the calreticulin/calnexin cycle. This lectin may interact transiently with almost all of the monoglucosylated glycoproteins that are synthesized in the ER. This Onchocerca volvulus protein is Calreticulin (crt-1).